A 139-amino-acid chain; its full sequence is Cystatin-1 (139 aa).

A signal peptide spans 1–22 (MHSRLPVPASLCLLLLLPSVLP). The Cystatin domain occupies 27-127 (GGLSPRDVTD…CHFEVWSRPW (101 aa)). Positions 71–75 (QVVSG) match the Secondary area of contact motif. Cystine bridges form between cysteine 89–cysteine 105 and cysteine 118–cysteine 138.

It belongs to the cystatin family. Expressed by the venom gland.

The protein localises to the secreted. Functionally, inhibits various C1 cysteine proteases including cathepsin L, papain and cathepsin B. This protein has no toxic activity and its function in the venom is unknown. It may play a role as housekeeping or regulatory protein. The polypeptide is Cystatin-1 (Crotalus adamanteus (Eastern diamondback rattlesnake)).